Reading from the N-terminus, the 260-residue chain is Ribonuclease 3 (260 aa).

The segment at 1–24 (MAQSSKYQRKPRSGERKRSQRRLE) is disordered. Residues 12–24 (RSGERKRSQRRLE) show a composition bias toward basic and acidic residues. An RNase III domain is found at 33–162 (FDDLLVRTGL…FIGALYMDQG (130 aa)). Mg(2+) is bound at residue glutamate 75. Aspartate 79 is an active-site residue. Aspartate 148 and glutamate 151 together coordinate Mg(2+). The active site involves glutamate 151. The DRBM domain occupies 188–257 (DFKSQLQEFV…AKQALLALNQ (70 aa)).

The protein belongs to the ribonuclease III family. In terms of assembly, homodimer. Requires Mg(2+) as cofactor.

It is found in the cytoplasm. It carries out the reaction Endonucleolytic cleavage to 5'-phosphomonoester.. Its function is as follows. Digests double-stranded RNA. Involved in the processing of primary rRNA transcript to yield the immediate precursors to the large and small rRNAs (23S and 16S). Processes some mRNAs, and tRNAs when they are encoded in the rRNA operon. Processes pre-crRNA and tracrRNA of type II CRISPR loci if present in the organism. This Shouchella clausii (strain KSM-K16) (Alkalihalobacillus clausii) protein is Ribonuclease 3.